The sequence spans 250 residues: Uridylate kinase (250 aa).

19–22 (KLSG) contributes to the ATP binding site. Gly61 provides a ligand contact to UMP. Residues Gly62 and Arg66 each coordinate ATP. Residues Asp81 and 142–149 (TGNPFFTT) each bind UMP. Residues Thr169, Gln170, Tyr175, and Asp178 each contribute to the ATP site.

Belongs to the UMP kinase family. In terms of assembly, homohexamer.

It localises to the cytoplasm. The enzyme catalyses UMP + ATP = UDP + ADP. It participates in pyrimidine metabolism; CTP biosynthesis via de novo pathway; UDP from UMP (UMPK route): step 1/1. Inhibited by UTP. Its function is as follows. Catalyzes the reversible phosphorylation of UMP to UDP. The sequence is that of Uridylate kinase from Rhodospirillum rubrum (strain ATCC 11170 / ATH 1.1.1 / DSM 467 / LMG 4362 / NCIMB 8255 / S1).